Consider the following 1198-residue polypeptide: Tetratricopeptide repeat protein 17 (1198 aa).

The stretch at Phe-295 to Phe-328 is one TPR 1 repeat. Residues Cys-340–His-382 are a coiled coil. 2 TPR repeats span residues Trp-619–Gln-652 and Pro-689–Cys-722. 2 disordered regions span residues Pro-771–Glu-825 and Lys-903–Asn-924. Basic residues predominate over residues Lys-903–Gly-914. TPR repeat units lie at residues Ser-1071–Gln-1105, Asp-1108–Phe-1141, and Ala-1142–Phe-1175.

The protein belongs to the TTC17 family. Interacts with CATIP. Expressed in germ cells as well as in somatic cells of the testis (at protein level). Ubiquitous.

The protein resides in the cytoplasm. Its subcellular location is the cell membrane. It is found in the cytoskeleton. Plays a role in primary ciliogenesis by modulating actin polymerization. The sequence is that of Tetratricopeptide repeat protein 17 (Ttc17) from Rattus norvegicus (Rat).